The sequence spans 97 residues: Co-chaperonin GroES (97 aa).

The protein belongs to the GroES chaperonin family. In terms of assembly, heptamer of 7 subunits arranged in a ring. Interacts with the chaperonin GroEL.

Its subcellular location is the cytoplasm. Its function is as follows. Together with the chaperonin GroEL, plays an essential role in assisting protein folding. The GroEL-GroES system forms a nano-cage that allows encapsulation of the non-native substrate proteins and provides a physical environment optimized to promote and accelerate protein folding. GroES binds to the apical surface of the GroEL ring, thereby capping the opening of the GroEL channel. The sequence is that of Co-chaperonin GroES from Pseudomonas putida (strain W619).